Reading from the N-terminus, the 370-residue chain is 3-isopropylmalate dehydrogenase 1 (370 aa).

4 residues coordinate substrate: Arg98, Arg108, Arg136, and Asp227. Asp227, Asp251, and Asp255 together coordinate Mg(2+). 289–301 (GSAPDIAGQGIAN) contacts NAD(+).

The protein belongs to the isocitrate and isopropylmalate dehydrogenases family. LeuB type 1 subfamily. In terms of assembly, homodimer. The cofactor is Mg(2+). Requires Mn(2+) as cofactor.

The protein resides in the cytoplasm. The enzyme catalyses (2R,3S)-3-isopropylmalate + NAD(+) = 4-methyl-2-oxopentanoate + CO2 + NADH. It functions in the pathway amino-acid biosynthesis; L-leucine biosynthesis; L-leucine from 3-methyl-2-oxobutanoate: step 3/4. In terms of biological role, catalyzes the oxidation of 3-carboxy-2-hydroxy-4-methylpentanoate (3-isopropylmalate) to 3-carboxy-4-methyl-2-oxopentanoate. The product decarboxylates to 4-methyl-2 oxopentanoate. The sequence is that of 3-isopropylmalate dehydrogenase 1 from Bordetella bronchiseptica (strain ATCC BAA-588 / NCTC 13252 / RB50) (Alcaligenes bronchisepticus).